The chain runs to 223 residues: Ribose-5-phosphate isomerase A (223 aa).

Substrate is bound by residues threonine 28–threonine 31, aspartate 81–aspartate 84, and lysine 94–glycine 97. Glutamate 103 serves as the catalytic Proton acceptor. Lysine 121 lines the substrate pocket.

It belongs to the ribose 5-phosphate isomerase family. As to quaternary structure, homodimer.

It carries out the reaction aldehydo-D-ribose 5-phosphate = D-ribulose 5-phosphate. The protein operates within carbohydrate degradation; pentose phosphate pathway; D-ribose 5-phosphate from D-ribulose 5-phosphate (non-oxidative stage): step 1/1. Functionally, catalyzes the reversible conversion of ribose-5-phosphate to ribulose 5-phosphate. The chain is Ribose-5-phosphate isomerase A from Janthinobacterium sp. (strain Marseille) (Minibacterium massiliensis).